Consider the following 145-residue polypeptide: Photosystem I reaction center subunit XI (145 aa).

3 consecutive transmembrane segments (helical) span residues 48–68 (LEIG…LGPL), 75–95 (LLVG…GLTI), and 125–145 (IGAF…SFFA).

Belongs to the PsaL family.

The protein localises to the plastid. Its subcellular location is the chloroplast thylakoid membrane. The chain is Photosystem I reaction center subunit XI from Emiliania huxleyi (Coccolithophore).